A 297-amino-acid polypeptide reads, in one-letter code: Bifunctional protein FolD (297 aa).

Residues 166 to 168, S191, and I232 each bind NADP(+); that span reads GRS.

It belongs to the tetrahydrofolate dehydrogenase/cyclohydrolase family. Homodimer.

The catalysed reaction is (6R)-5,10-methylene-5,6,7,8-tetrahydrofolate + NADP(+) = (6R)-5,10-methenyltetrahydrofolate + NADPH. The enzyme catalyses (6R)-5,10-methenyltetrahydrofolate + H2O = (6R)-10-formyltetrahydrofolate + H(+). Its pathway is one-carbon metabolism; tetrahydrofolate interconversion. Its function is as follows. Catalyzes the oxidation of 5,10-methylenetetrahydrofolate to 5,10-methenyltetrahydrofolate and then the hydrolysis of 5,10-methenyltetrahydrofolate to 10-formyltetrahydrofolate. The polypeptide is Bifunctional protein FolD (Phenylobacterium zucineum (strain HLK1)).